The following is a 255-amino-acid chain: Na(+)-translocating NADH-quinone reductase subunit C (255 aa).

A helical transmembrane segment spans residues 12–32 (LFVVIALSLVCSIIVSTAAVG). Thr223 is subject to FMN phosphoryl threonine.

It belongs to the NqrC family. Composed of six subunits; NqrA, NqrB, NqrC, NqrD, NqrE and NqrF. The cofactor is FMN.

It localises to the cell inner membrane. It carries out the reaction a ubiquinone + n Na(+)(in) + NADH + H(+) = a ubiquinol + n Na(+)(out) + NAD(+). Its function is as follows. NQR complex catalyzes the reduction of ubiquinone-1 to ubiquinol by two successive reactions, coupled with the transport of Na(+) ions from the cytoplasm to the periplasm. NqrA to NqrE are probably involved in the second step, the conversion of ubisemiquinone to ubiquinol. The sequence is that of Na(+)-translocating NADH-quinone reductase subunit C from Vibrio anguillarum (Listonella anguillarum).